The sequence spans 133 residues: NADPH-dependent 7-cyano-7-deazaguanine reductase (133 aa).

Cys-49 functions as the Thioimide intermediate in the catalytic mechanism. The active-site Proton donor is Asp-56. Residues 71–73 (IEL) and 90–91 (HE) contribute to the substrate site.

It belongs to the GTP cyclohydrolase I family. QueF type 1 subfamily.

The protein resides in the cytoplasm. It catalyses the reaction 7-aminomethyl-7-carbaguanine + 2 NADP(+) = 7-cyano-7-deazaguanine + 2 NADPH + 3 H(+). Its pathway is tRNA modification; tRNA-queuosine biosynthesis. Functionally, catalyzes the NADPH-dependent reduction of 7-cyano-7-deazaguanine (preQ0) to 7-aminomethyl-7-deazaguanine (preQ1). The protein is NADPH-dependent 7-cyano-7-deazaguanine reductase of Leptospira interrogans serogroup Icterohaemorrhagiae serovar copenhageni (strain Fiocruz L1-130).